A 306-amino-acid chain; its full sequence is Reaction center protein M chain (306 aa).

Helical transmembrane passes span 53-79, 111-140, and 143-168; these read GTTGVLSLVFGFFAIEIIGFNLLASVN, GGWWQIAGFFLTTSILLWWVRMYRRARALK, and THTAWAFASAIFLFLSLGFIRPLLMG. (7R,8Z)-bacteriochlorophyll b-binding residues include His-181 and His-201. Residues 198–226 traverse the membrane as a helical segment; sequence NPFHMLSIAFLYGSALLSAMHGATILAVS. Residues His-218 and Glu-233 each contribute to the Fe cation site. Trp-251 contacts a ubiquinone. Residues 260–286 traverse the membrane as a helical segment; that stretch reads TMESIHRWAWWFAVLCTFTGAIGILLT. His-265 contacts Fe cation.

It belongs to the reaction center PufL/M/PsbA/D family. Reaction center is composed of four bacteriochlorophylls, two bacteriopheophytins, two ubiquinones, one iron, and three highly hydrophobic polypeptide chains (designated L, M, and H).

The protein resides in the cellular chromatophore membrane. Functionally, the reaction center is a membrane-bound complex that mediates the initial photochemical event in the electron transfer process of photosynthesis. This chain is Reaction center protein M chain (pufM), found in Rhodospirillum rubrum.